A 436-amino-acid polypeptide reads, in one-letter code: 3-ketoacyl-CoA thiolase (436 aa).

Catalysis depends on Cys-99, which acts as the Acyl-thioester intermediate. Residues His-392 and Cys-422 each act as proton acceptor in the active site.

The protein belongs to the thiolase-like superfamily. Thiolase family. Heterotetramer of two alpha chains (FadJ) and two beta chains (FadI).

The protein localises to the cytoplasm. It carries out the reaction an acyl-CoA + acetyl-CoA = a 3-oxoacyl-CoA + CoA. Its pathway is lipid metabolism; fatty acid beta-oxidation. Catalyzes the final step of fatty acid oxidation in which acetyl-CoA is released and the CoA ester of a fatty acid two carbons shorter is formed. This is 3-ketoacyl-CoA thiolase from Salmonella paratyphi C (strain RKS4594).